Consider the following 337-residue polypeptide: Glyceraldehyde-3-phosphate dehydrogenase 3, cytosolic (337 aa).

NAD(+) contacts are provided by residues 13-14 (RI), aspartate 35, and arginine 82. D-glyceraldehyde 3-phosphate contacts are provided by residues 153–155 (SCT), threonine 184, 213–214 (TG), and arginine 236. Cysteine 154 serves as the catalytic Nucleophile. NAD(+) is bound at residue asparagine 318.

Belongs to the glyceraldehyde-3-phosphate dehydrogenase family. As to quaternary structure, homotetramer.

It localises to the cytoplasm. The enzyme catalyses D-glyceraldehyde 3-phosphate + phosphate + NAD(+) = (2R)-3-phospho-glyceroyl phosphate + NADH + H(+). Its pathway is carbohydrate degradation; glycolysis; pyruvate from D-glyceraldehyde 3-phosphate: step 1/5. Key enzyme in glycolysis that catalyzes the first step of the pathway by converting D-glyceraldehyde 3-phosphate (G3P) into 3-phospho-D-glyceroyl phosphate. Essential for the maintenance of cellular ATP levels and carbohydrate metabolism. This Oryza sativa subsp. japonica (Rice) protein is Glyceraldehyde-3-phosphate dehydrogenase 3, cytosolic (GAPC3).